The following is a 136-amino-acid chain: Probable intron-encoded DNA endonuclease 3 (136 aa).

Belongs to the LAGLIDADG endonuclease family.

It localises to the mitochondrion. In terms of biological role, mitochondrial DNA endonuclease involved in intron homing. This is Probable intron-encoded DNA endonuclease 3 (hegI3) from Mycosarcoma maydis (Corn smut fungus).